The sequence spans 2358 residues: Cell wall alpha-1,3-glucan synthase mok13 (2358 aa).

A compositionally biased stretch (basic and acidic residues) spans 1645 to 1659 (EGLENEENELKDKAP). The segment at 1645–1669 (EGLENEENELKDKAPPNEPNVGSLF) is disordered.

Belongs to the glycosyltransferase group 1 family.

It catalyses the reaction [(1-&gt;3)-alpha-D-glucosyl](n) + UDP-alpha-D-glucose = [(1-&gt;3)-alpha-D-glucosyl](n+1) + UDP + H(+). In Schizosaccharomyces pombe (strain 972 / ATCC 24843) (Fission yeast), this protein is Cell wall alpha-1,3-glucan synthase mok13 (mok13).